Reading from the N-terminus, the 431-residue chain is 23S rRNA (uracil(1939)-C(5))-methyltransferase RlmD (431 aa).

Residues 10 to 68 (RVTTRQIITVKVNDLDSFGQGVARHNGKALFIPGLLPEESAEVIITEDKKQFARARVSR) form the TRAM domain. [4Fe-4S] cluster is bound by residues Cys81, Cys87, Cys90, and Cys161. The S-adenosyl-L-methionine site is built by Gln264, Phe293, Asn298, Glu314, Asn341, and Asp362. The active-site Nucleophile is Cys388.

It belongs to the class I-like SAM-binding methyltransferase superfamily. RNA M5U methyltransferase family. RlmD subfamily.

The catalysed reaction is uridine(1939) in 23S rRNA + S-adenosyl-L-methionine = 5-methyluridine(1939) in 23S rRNA + S-adenosyl-L-homocysteine + H(+). Its function is as follows. Catalyzes the formation of 5-methyl-uridine at position 1939 (m5U1939) in 23S rRNA. This chain is 23S rRNA (uracil(1939)-C(5))-methyltransferase RlmD, found in Salmonella choleraesuis (strain SC-B67).